Here is a 601-residue protein sequence, read N- to C-terminus: Elongation factor 4 (601 aa).

Residues 7–189 enclose the tr-type G domain; sequence DNIRNFSIVA…AIVKRLPAPK (183 aa). GTP is bound by residues 19 to 24 and 136 to 139; these read DHGKST and NKVD.

The protein belongs to the TRAFAC class translation factor GTPase superfamily. Classic translation factor GTPase family. LepA subfamily.

Its subcellular location is the cell inner membrane. The enzyme catalyses GTP + H2O = GDP + phosphate + H(+). Functionally, required for accurate and efficient protein synthesis under certain stress conditions. May act as a fidelity factor of the translation reaction, by catalyzing a one-codon backward translocation of tRNAs on improperly translocated ribosomes. Back-translocation proceeds from a post-translocation (POST) complex to a pre-translocation (PRE) complex, thus giving elongation factor G a second chance to translocate the tRNAs correctly. Binds to ribosomes in a GTP-dependent manner. The polypeptide is Elongation factor 4 (Methylorubrum extorquens (strain CM4 / NCIMB 13688) (Methylobacterium extorquens)).